A 163-amino-acid polypeptide reads, in one-letter code: Protein-export protein SecB (163 aa).

Belongs to the SecB family. In terms of assembly, homotetramer, a dimer of dimers. One homotetramer interacts with 1 SecA dimer.

It localises to the cytoplasm. In terms of biological role, one of the proteins required for the normal export of preproteins out of the cell cytoplasm. It is a molecular chaperone that binds to a subset of precursor proteins, maintaining them in a translocation-competent state. It also specifically binds to its receptor SecA. The protein is Protein-export protein SecB of Methylibium petroleiphilum (strain ATCC BAA-1232 / LMG 22953 / PM1).